Consider the following 179-residue polypeptide: Large ribosomal subunit protein uL5 (179 aa).

This sequence belongs to the universal ribosomal protein uL5 family. As to quaternary structure, part of the 50S ribosomal subunit; part of the 5S rRNA/L5/L18/L25 subcomplex. Contacts the 5S rRNA and the P site tRNA. Forms a bridge to the 30S subunit in the 70S ribosome.

Its function is as follows. This is one of the proteins that bind and probably mediate the attachment of the 5S RNA into the large ribosomal subunit, where it forms part of the central protuberance. In the 70S ribosome it contacts protein S13 of the 30S subunit (bridge B1b), connecting the 2 subunits; this bridge is implicated in subunit movement. Contacts the P site tRNA; the 5S rRNA and some of its associated proteins might help stabilize positioning of ribosome-bound tRNAs. This Lawsonia intracellularis (strain PHE/MN1-00) protein is Large ribosomal subunit protein uL5.